The primary structure comprises 472 residues: Acetyl-CoA decarbonylase/synthase complex subunit beta 2 (472 aa).

4 residues coordinate [Ni-Fe-S] cluster: cysteine 189, cysteine 192, cysteine 278, and cysteine 280.

The protein belongs to the CdhC family. Monomer. The ACDS complex is made up of alpha, epsilon, beta, gamma and delta chains with a probable stoichiometry of (alpha(2)epsilon(2))(4)-beta(8)-(gamma(1)delta(1))(8) (Potential). The cofactor is [Ni-Fe-S] cluster.

The enzyme catalyses Co(I)-[corrinoid Fe-S protein] + acetyl-CoA + H(+) = methyl-Co(III)-[corrinoid Fe-S protein] + CO + CoA. The protein operates within one-carbon metabolism; methanogenesis from acetate. Its function is as follows. Part of a complex that catalyzes the reversible cleavage of acetyl-CoA, allowing growth on acetate as sole source of carbon and energy. The alpha-epsilon complex generates CO from CO(2), while the beta subunit (this protein) combines the CO with CoA and a methyl group to form acetyl-CoA. The methyl group, which is incorporated into acetyl-CoA, is transferred to the beta subunit by a corrinoid iron-sulfur protein (the gamma-delta complex). This chain is Acetyl-CoA decarbonylase/synthase complex subunit beta 2 (cdhC2), found in Methanosarcina thermophila.